The following is a 257-amino-acid chain: Tryptophan synthase alpha chain (257 aa).

Active-site proton acceptor residues include Glu47 and Asp58.

It belongs to the TrpA family. In terms of assembly, tetramer of two alpha and two beta chains.

It carries out the reaction (1S,2R)-1-C-(indol-3-yl)glycerol 3-phosphate + L-serine = D-glyceraldehyde 3-phosphate + L-tryptophan + H2O. Its pathway is amino-acid biosynthesis; L-tryptophan biosynthesis; L-tryptophan from chorismate: step 5/5. The alpha subunit is responsible for the aldol cleavage of indoleglycerol phosphate to indole and glyceraldehyde 3-phosphate. The polypeptide is Tryptophan synthase alpha chain (Listeria innocua serovar 6a (strain ATCC BAA-680 / CLIP 11262)).